Reading from the N-terminus, the 208-residue chain is Uracil phosphoribosyltransferase (208 aa).

5-phospho-alpha-D-ribose 1-diphosphate is bound by residues Arg78, Arg103, and 130–138 (DPMLATGGS). Residues Ile193 and 198-200 (GDA) contribute to the uracil site. A 5-phospho-alpha-D-ribose 1-diphosphate-binding site is contributed by Asp199.

Belongs to the UPRTase family. Mg(2+) serves as cofactor.

It catalyses the reaction UMP + diphosphate = 5-phospho-alpha-D-ribose 1-diphosphate + uracil. Its pathway is pyrimidine metabolism; UMP biosynthesis via salvage pathway; UMP from uracil: step 1/1. With respect to regulation, allosterically activated by GTP. Catalyzes the conversion of uracil and 5-phospho-alpha-D-ribose 1-diphosphate (PRPP) to UMP and diphosphate. The chain is Uracil phosphoribosyltransferase from Vibrio parahaemolyticus serotype O3:K6 (strain RIMD 2210633).